A 371-amino-acid polypeptide reads, in one-letter code: Opsin Rh1 (371 aa).

Over M1 to W47 the chain is Extracellular. N-linked (GlcNAc...) asparagine glycosylation is present at N18. A helical transmembrane segment spans residues A48–I72. Topologically, residues F73 to N84 are cytoplasmic. Residues L85–F110 traverse the membrane as a helical segment. Over Y111–Y124 the chain is Extracellular. A disulfide bridge connects residues C121 and C198. The chain crosses the membrane as a helical span at residues G125–L144. Residues D145–L163 are Cytoplasmic-facing. The helical transmembrane segment at A164 to S187 threads the bilayer. Residues R188–S211 are Extracellular-facing. Residues Y212 to V239 form a helical membrane-spanning segment. Residues S240–K274 are Cytoplasmic-facing. Residues V275–L298 traverse the membrane as a helical segment. The Extracellular portion of the chain corresponds to F299 to T305. A helical transmembrane segment spans residues P306–S330. An N6-(retinylidene)lysine modification is found at K317. At H331–A371 the chain is on the cytoplasmic side.

It belongs to the G-protein coupled receptor 1 family. Opsin subfamily. Phosphorylated on some or all of the serine and threonine residues present in the C-terminal region.

Its subcellular location is the cell projection. It is found in the rhabdomere membrane. Its function is as follows. Visual pigments are the light-absorbing molecules that mediate vision. They consist of an apoprotein, opsin, covalently linked to cis-retinal. The protein is Opsin Rh1 (NINAE) of Calliphora vicina (Blue blowfly).